A 448-amino-acid polypeptide reads, in one-letter code: Chaperone SurA (448 aa).

The signal sequence occupies residues 1 to 27 (MKKTLRFAAVAAGLVASLITVAPSASA). 2 consecutive PpiC domains span residues 185–288 (QQDL…RLVD) and 301–399 (IVQT…QVLG). A disordered region spans residues 230–249 (LAKSQSEADDAKKGGDLGFK).

It is found in the periplasm. It carries out the reaction [protein]-peptidylproline (omega=180) = [protein]-peptidylproline (omega=0). Chaperone involved in the correct folding and assembly of outer membrane proteins. Recognizes specific patterns of aromatic residues and the orientation of their side chains, which are found more frequently in integral outer membrane proteins. May act in both early periplasmic and late outer membrane-associated steps of protein maturation. The sequence is that of Chaperone SurA from Burkholderia thailandensis (strain ATCC 700388 / DSM 13276 / CCUG 48851 / CIP 106301 / E264).